The sequence spans 343 residues: Protein FAM50A-B (343 aa).

Disordered regions lie at residues 1–25 (MAQYKGAASEAGRAMQLMKKREKQR) and 125–181 (EEDE…EEEN). The span at 125 to 142 (EEDEECEDEESEEEEEEY) shows a compositional bias: acidic residues. The segment covering 172–181 (PDRDREEEEN) has biased composition (basic and acidic residues).

It belongs to the FAM50 family.

It is found in the nucleus. Probably involved in the regulation of pre-mRNA splicing. In Xenopus laevis (African clawed frog), this protein is Protein FAM50A-B (fam50a-b).